A 540-amino-acid polypeptide reads, in one-letter code: Chaperonin GroEL 1 (540 aa).

Residues threonine 29–proline 32, aspartate 86–threonine 90, glycine 413, asparagine 478–alanine 480, and aspartate 494 contribute to the ATP site.

Belongs to the chaperonin (HSP60) family. As to quaternary structure, forms a cylinder of 14 subunits composed of two heptameric rings stacked back-to-back. Interacts with the co-chaperonin GroES.

The protein localises to the cytoplasm. It catalyses the reaction ATP + H2O + a folded polypeptide = ADP + phosphate + an unfolded polypeptide.. Functionally, together with its co-chaperonin GroES, plays an essential role in assisting protein folding. The GroEL-GroES system forms a nano-cage that allows encapsulation of the non-native substrate proteins and provides a physical environment optimized to promote and accelerate protein folding. In Mycobacterium sp. (strain JLS), this protein is Chaperonin GroEL 1.